The following is a 1070-amino-acid chain: DNA-directed RNA polymerase subunit beta (1070 aa).

Belongs to the RNA polymerase beta chain family. In plastids the minimal PEP RNA polymerase catalytic core is composed of four subunits: alpha, beta, beta', and beta''. When a (nuclear-encoded) sigma factor is associated with the core the holoenzyme is formed, which can initiate transcription.

The protein localises to the plastid. The protein resides in the chloroplast. The catalysed reaction is RNA(n) + a ribonucleoside 5'-triphosphate = RNA(n+1) + diphosphate. DNA-dependent RNA polymerase catalyzes the transcription of DNA into RNA using the four ribonucleoside triphosphates as substrates. This Spinacia oleracea (Spinach) protein is DNA-directed RNA polymerase subunit beta.